The primary structure comprises 277 residues: Pantothenate synthetase (277 aa).

ATP is bound at residue 28-35 (MGALHSGH). His-35 (proton donor) is an active-site residue. Gln-59 contacts (R)-pantoate. Beta-alanine is bound at residue Gln-59. Residues 145-148 (GEKD), Val-174, and 182-185 (LSSR) each bind ATP.

It belongs to the pantothenate synthetase family. Homodimer.

It is found in the cytoplasm. The catalysed reaction is (R)-pantoate + beta-alanine + ATP = (R)-pantothenate + AMP + diphosphate + H(+). It participates in cofactor biosynthesis; (R)-pantothenate biosynthesis; (R)-pantothenate from (R)-pantoate and beta-alanine: step 1/1. Catalyzes the condensation of pantoate with beta-alanine in an ATP-dependent reaction via a pantoyl-adenylate intermediate. The protein is Pantothenate synthetase of Anaplasma marginale (strain St. Maries).